Here is a 504-residue protein sequence, read N- to C-terminus: ATP synthase subunit alpha 1 (504 aa).

ATP is bound at residue 172-179; the sequence is GDRQTGKT.

It belongs to the ATPase alpha/beta chains family. In terms of assembly, F-type ATPases have 2 components, CF(1) - the catalytic core - and CF(0) - the membrane proton channel. CF(1) has five subunits: alpha(3), beta(3), gamma(1), delta(1), epsilon(1). CF(0) has three main subunits: a(1), b(2) and c(9-12). The alpha and beta chains form an alternating ring which encloses part of the gamma chain. CF(1) is attached to CF(0) by a central stalk formed by the gamma and epsilon chains, while a peripheral stalk is formed by the delta and b chains.

It localises to the cell inner membrane. The enzyme catalyses ATP + H2O + 4 H(+)(in) = ADP + phosphate + 5 H(+)(out). Its function is as follows. Produces ATP from ADP in the presence of a proton gradient across the membrane. The alpha chain is a regulatory subunit. This Rhodopirellula baltica (strain DSM 10527 / NCIMB 13988 / SH1) protein is ATP synthase subunit alpha 1.